Here is a 488-residue protein sequence, read N- to C-terminus: Malonate-semialdehyde dehydrogenase (488 aa).

NAD(+) is bound by residues Ala-150, Phe-152, Lys-176, Glu-179, Arg-180, Ser-229, and Thr-251. Residue Cys-284 is the Nucleophile of the active site. Residue Glu-382 coordinates NAD(+).

Belongs to the aldehyde dehydrogenase family. IolA subfamily. Homotetramer.

The enzyme catalyses 3-oxopropanoate + NAD(+) + CoA + H2O = hydrogencarbonate + acetyl-CoA + NADH + H(+). The catalysed reaction is 2-methyl-3-oxopropanoate + NAD(+) + CoA + H2O = propanoyl-CoA + hydrogencarbonate + NADH + H(+). It functions in the pathway polyol metabolism; myo-inositol degradation into acetyl-CoA; acetyl-CoA from myo-inositol: step 7/7. Its function is as follows. Catalyzes the oxidation of malonate semialdehyde (MSA) and methylmalonate semialdehyde (MMSA) into acetyl-CoA and propanoyl-CoA, respectively. Is involved in a myo-inositol catabolic pathway. Bicarbonate, and not CO2, is the end-product of the enzymatic reaction. This Listeria monocytogenes serotype 4a (strain HCC23) protein is Malonate-semialdehyde dehydrogenase.